A 175-amino-acid chain; its full sequence is Translation initiation factor IF-3 (175 aa).

It belongs to the IF-3 family. Monomer.

Its subcellular location is the cytoplasm. Functionally, IF-3 binds to the 30S ribosomal subunit and shifts the equilibrium between 70S ribosomes and their 50S and 30S subunits in favor of the free subunits, thus enhancing the availability of 30S subunits on which protein synthesis initiation begins. The polypeptide is Translation initiation factor IF-3 (Staphylococcus aureus (strain USA300)).